Reading from the N-terminus, the 320-residue chain is Olfactory receptor 10J1 (320 aa).

Residues 1 to 36 (MLLCFRFGNQSMKRENFTLITDFVFQGFSSFHEQQI) lie on the Extracellular side of the membrane. N-linked (GlcNAc...) asparagine glycosylation is found at N9 and N16. A helical transmembrane segment spans residues 37 to 57 (TLFGVFLALYILTLAGNIIIV). Residues 58-65 (TIIRMDLH) are Cytoplasmic-facing. A helical membrane pass occupies residues 66 to 86 (LHTPMYFFLSMLSTSETVYTL). At 87-110 (VILPRMLSSLVGMSQPISLAGCAT) the chain is on the extracellular side. C108 and C199 are oxidised to a cystine. The chain crosses the membrane as a helical span at residues 111–131 (QMFFFVTFGITNCFLLTAMGY). The Cytoplasmic portion of the chain corresponds to 132-150 (DRYVAICNPLRYMVIMNKR). The helical transmembrane segment at 151 to 171 (LRIQLVLGACSIGLIVAITQV) threads the bilayer. Over 172-207 (TSVFRLPFCARKVPHFFCDIRPVMKLSCIDTTVNEI) the chain is Extracellular. A helical transmembrane segment spans residues 208–227 (LTLIISVLVLVVPMGLVFIS). At 228 to 247 (YVLIISTILKIASVEGRKKA) the chain is on the cytoplasmic side. A helical transmembrane segment spans residues 248–268 (FATCASHLTVVIVHYSCASIA). At 269–281 (YLKPKSENTREHD) the chain is on the extracellular side. The helical transmembrane segment at 282–302 (QLISVTYTVITPLLNPVVYTL) threads the bilayer. The Cytoplasmic portion of the chain corresponds to 303-320 (RNKEVKDALCRAVGGKFS).

It belongs to the G-protein coupled receptor 1 family.

Its subcellular location is the cell membrane. Odorant receptor. This is Olfactory receptor 10J1 (OR10J1) from Homo sapiens (Human).